Consider the following 301-residue polypeptide: Homoserine O-acetyltransferase (301 aa).

Cysteine 142 (acyl-thioester intermediate) is an active-site residue. The substrate site is built by lysine 163 and serine 192. Histidine 235 (proton acceptor) is an active-site residue. Glutamate 237 is an active-site residue. Arginine 249 serves as a coordination point for substrate.

Belongs to the MetA family.

The protein localises to the cytoplasm. The enzyme catalyses L-homoserine + acetyl-CoA = O-acetyl-L-homoserine + CoA. Its pathway is amino-acid biosynthesis; L-methionine biosynthesis via de novo pathway; O-acetyl-L-homoserine from L-homoserine: step 1/1. Its function is as follows. Transfers an acetyl group from acetyl-CoA to L-homoserine, forming acetyl-L-homoserine. This is Homoserine O-acetyltransferase from Bacillus cereus (strain B4264).